The primary structure comprises 204 residues: Thymidylate kinase (204 aa).

11-18 (GLDKSGKT) is a binding site for ATP.

The protein belongs to the thymidylate kinase family.

The catalysed reaction is dTMP + ATP = dTDP + ADP. It participates in pyrimidine metabolism; dTTP biosynthesis. The protein is Thymidylate kinase (TMK) of Ectromelia virus (strain Moscow) (ECTV).